Here is a 516-residue protein sequence, read N- to C-terminus: 3-phosphoshikimate 1-carboxyvinyltransferase, chloroplastic (516 aa).

The N-terminal 72 residues, 1-72, are a transit peptide targeting the chloroplast; sequence MAQINNMAQG…RISASVATAQ (72 aa). 3-phosphoshikimate is bound by residues Lys95, Ser96, and Arg100. Lys95 contributes to the phosphoenolpyruvate binding site. Residues Gly173 and Arg203 each coordinate phosphoenolpyruvate. 3-phosphoshikimate is bound by residues Ser250, Ser251, Gln252, Ser278, Asp403, and Lys430. Gln252 serves as a coordination point for phosphoenolpyruvate. Residue Asp403 is the Proton acceptor of the active site. The phosphoenolpyruvate site is built by Arg434, Arg476, and Lys501.

Belongs to the EPSP synthase family. Mostly expressed in flower petals, and, to a lower extent, in roots, stems and anthers, but barely in leaves.

It localises to the plastid. It is found in the chloroplast. It catalyses the reaction 3-phosphoshikimate + phosphoenolpyruvate = 5-O-(1-carboxyvinyl)-3-phosphoshikimate + phosphate. Its pathway is metabolic intermediate biosynthesis; chorismate biosynthesis; chorismate from D-erythrose 4-phosphate and phosphoenolpyruvate: step 6/7. With respect to regulation, competitively inhibited by glyphosate. Its function is as follows. Catalyzes the transfer of the enolpyruvyl moiety of phosphoenolpyruvate (PEP) to the 5-hydroxyl of shikimate-3-phosphate (S3P) to produce enolpyruvyl shikimate-3-phosphate and inorganic phosphate. Involved in the accumulation of volatile benzoides in flowers, scent attracting pollinators (e.g. the night-active hawkmoth pollinator Manduca sexta). The sequence is that of 3-phosphoshikimate 1-carboxyvinyltransferase, chloroplastic from Petunia hybrida (Petunia).